The chain runs to 329 residues: Glycerol-3-phosphate dehydrogenase [NAD(P)+] (329 aa).

NADPH contacts are provided by Trp-11 and Lys-101. Residues Lys-101, Gly-132, and Ser-134 each contribute to the sn-glycerol 3-phosphate site. Ala-136 contacts NADPH. 5 residues coordinate sn-glycerol 3-phosphate: Lys-188, Asp-241, Ser-251, Arg-252, and Asn-253. Residue Lys-188 is the Proton acceptor of the active site. NADPH is bound at residue Arg-252. Val-276 and Glu-278 together coordinate NADPH.

It belongs to the NAD-dependent glycerol-3-phosphate dehydrogenase family.

It is found in the cytoplasm. The enzyme catalyses sn-glycerol 3-phosphate + NAD(+) = dihydroxyacetone phosphate + NADH + H(+). It catalyses the reaction sn-glycerol 3-phosphate + NADP(+) = dihydroxyacetone phosphate + NADPH + H(+). Its pathway is membrane lipid metabolism; glycerophospholipid metabolism. Functionally, catalyzes the reduction of the glycolytic intermediate dihydroxyacetone phosphate (DHAP) to sn-glycerol 3-phosphate (G3P), the key precursor for phospholipid synthesis. The protein is Glycerol-3-phosphate dehydrogenase [NAD(P)+] of Phytoplasma australiense.